The following is a 229-amino-acid chain: MQNAFTIDQLPLSWQEQLENEWSQPYMHKLREFLQTEYSRTTVYPAKDNIFTALKSTPFDAVRVVVLGQDPYPGEGQAHGLSFSVPHGVRLPPSLMNIFRELQTDLGIKNTTGCLQPWADQGVLLLNTVLTVRAGAPFSHAGQGWERFTDAIVTKLIENRSHVIFVLWGNAARKKCDLLFRSTHKHAILAAAHPSPLAAHRGFFGCSHFSKINYLLKKLERPMINWKLP.

Asp70 (proton acceptor) is an active-site residue.

It belongs to the uracil-DNA glycosylase (UDG) superfamily. UNG family.

Its subcellular location is the cytoplasm. The enzyme catalyses Hydrolyzes single-stranded DNA or mismatched double-stranded DNA and polynucleotides, releasing free uracil.. In terms of biological role, excises uracil residues from the DNA which can arise as a result of misincorporation of dUMP residues by DNA polymerase or due to deamination of cytosine. The chain is Uracil-DNA glycosylase from Chlamydia felis (strain Fe/C-56) (Chlamydophila felis).